Reading from the N-terminus, the 426-residue chain is Glutamate-1-semialdehyde 2,1-aminomutase (426 aa).

K265 is subject to N6-(pyridoxal phosphate)lysine.

Belongs to the class-III pyridoxal-phosphate-dependent aminotransferase family. HemL subfamily. Homodimer. It depends on pyridoxal 5'-phosphate as a cofactor.

Its subcellular location is the cytoplasm. The catalysed reaction is (S)-4-amino-5-oxopentanoate = 5-aminolevulinate. Its pathway is porphyrin-containing compound metabolism; protoporphyrin-IX biosynthesis; 5-aminolevulinate from L-glutamyl-tRNA(Glu): step 2/2. This is Glutamate-1-semialdehyde 2,1-aminomutase from Escherichia coli O9:H4 (strain HS).